Here is a 140-residue protein sequence, read N- to C-terminus: ATP synthase epsilon chain (140 aa).

Belongs to the ATPase epsilon chain family. As to quaternary structure, F-type ATPases have 2 components, CF(1) - the catalytic core - and CF(0) - the membrane proton channel. CF(1) has five subunits: alpha(3), beta(3), gamma(1), delta(1), epsilon(1). CF(0) has three main subunits: a, b and c.

It localises to the cell inner membrane. In terms of biological role, produces ATP from ADP in the presence of a proton gradient across the membrane. This Thermodesulfovibrio yellowstonii (strain ATCC 51303 / DSM 11347 / YP87) protein is ATP synthase epsilon chain.